The primary structure comprises 152 residues: Proteolipid protein 2 (152 aa).

One can recognise an MARVEL domain in the interval 19–138 (FSRTKKGILL…DAYITFPLKQ (120 aa)). 4 helical membrane passes run 25–45 (GILLFAEIILCLVILICFSAS), 48–68 (SAYSSLSVIEMICAAVLLVFY), 85–105 (DFFRSLIATILYLITSIVVLV), and 112–132 (RVVAGILGLLATLLFGYDAYI).

The protein localises to the membrane. Functionally, may play a role in cell differentiation in the intestinal epithelium. In Mus musculus (Mouse), this protein is Proteolipid protein 2 (Plp2).